We begin with the raw amino-acid sequence, 173 residues long: MKVILKEDFINLGKEGDTVEVRDGFARNYLLPKGFAVFSNKHNIEIFNQKRRSILKKQEAKKQMANDLKSKLDLVKLEFFMKSNDSGKLFHSINSLNIADELLKLGFDIERKKIDIHHGTLKTFGTYDVTIKLYEGISSIIKVEIKKEKKQEDKKSLSKKLNKADEQGERAEV.

Residues 150–173 are disordered; it reads KQEDKKSLSKKLNKADEQGERAEV.

The protein belongs to the bacterial ribosomal protein bL9 family.

Its function is as follows. Binds to the 23S rRNA. This chain is Large ribosomal subunit protein bL9, found in Borreliella burgdorferi (strain ZS7) (Borrelia burgdorferi).